Reading from the N-terminus, the 322-residue chain is Mas-related G-protein coupled receptor member X4 (322 aa).

The Extracellular segment spans residues 1 to 31; sequence MDPTVPVFGTKLTPINGREETPCYNQTLSFT. N25 carries an N-linked (GlcNAc...) asparagine glycan. The chain crosses the membrane as a helical span at residues 32 to 52; sequence VLTCIISLVGLTGNAVVLWLL. The Cytoplasmic segment spans residues 53–60; the sequence is GYRMRRNA. The chain crosses the membrane as a helical span at residues 61 to 81; that stretch reads VSIYILNLAAADFLFLSFQII. The Extracellular portion of the chain corresponds to 82–96; sequence RLPLRLINISHLIRK. N89 carries an N-linked (GlcNAc...) asparagine glycan. The chain crosses the membrane as a helical span at residues 97–117; the sequence is ILVSVMTFPYFTGLSMLSAIS. Over 118-137 the chain is Cytoplasmic; it reads TERCLSVLWPIWYRCRRPTH. A helical transmembrane segment spans residues 138 to 158; that stretch reads LSAVVCVLLWGLSLLFSMLEW. At 159 to 177 the chain is on the extracellular side; the sequence is RFCDFLFSGADSSWCETSD. Residues 178-198 form a helical membrane-spanning segment; sequence FIPVAWLIFLCVVLCVSSLVL. At 199–218 the chain is on the cytoplasmic side; sequence LVRILCGSRKMPLTRLYVTI. The helical transmembrane segment at 219–239 threads the bilayer; sequence LLTVLVFLLCGLPFGILGALI. At 240–254 the chain is on the extracellular side; that stretch reads YRMHLNLEVLYCHVY. The chain crosses the membrane as a helical span at residues 255–275; sequence LVCMSLSSLNSSANPIIYFFV. At 276 to 322 the chain is on the cytoplasmic side; it reads GSFRQRQNRQNLKLVLQRALQDKPEVDKGEGQLPEESLELSGSRLGP. Positions 299 to 322 are disordered; it reads PEVDKGEGQLPEESLELSGSRLGP.

The protein belongs to the G-protein coupled receptor 1 family. Mas subfamily. Uniquely localized in a subset of small dorsal root and trigeminal sensory neurons.

Its subcellular location is the cell membrane. Its function is as follows. Orphan receptor. Probably involved in the function of nociceptive neurons. May regulate nociceptor function and/or development, including the sensation or modulation of pain. Potently activated by enkephalins. The sequence is that of Mas-related G-protein coupled receptor member X4 (MRGPRX4) from Homo sapiens (Human).